The primary structure comprises 79 residues: Cytochrome b (79 aa).

3 consecutive transmembrane segments (helical) span residues 1-7 (TALFLAM), 31-52 (WLIR…YLHI), and 67-79 (WNVG…LTMM). The heme b site is built by histidine 37 and histidine 51.

This sequence belongs to the cytochrome b family. In terms of assembly, the cytochrome bc1 complex contains 3 respiratory subunits (MT-CYB, CYC1 and UQCRFS1), 2 core proteins (UQCRC1 and UQCRC2) and probably 6 low-molecular weight proteins. Requires heme b as cofactor.

It localises to the mitochondrion inner membrane. Its function is as follows. Component of the ubiquinol-cytochrome c reductase complex (complex III or cytochrome b-c1 complex) that is part of the mitochondrial respiratory chain. The b-c1 complex mediates electron transfer from ubiquinol to cytochrome c. Contributes to the generation of a proton gradient across the mitochondrial membrane that is then used for ATP synthesis. The chain is Cytochrome b (mt-cyb) from Amphilophus citrinellus (Midas cichlid).